The chain runs to 335 residues: Anthranilate phosphoribosyltransferase (335 aa).

5-phospho-alpha-D-ribose 1-diphosphate is bound by residues Gly80, 83–84, Thr88, 90–93, 108–116, and Ser120; these read GD, NIST, and KHGNRAVSS. Gly80 is an anthranilate binding site. A Mg(2+)-binding site is contributed by Ser92. Residue Asn111 participates in anthranilate binding. Arg166 contributes to the anthranilate binding site. Residues Asp225 and Glu226 each contribute to the Mg(2+) site.

Belongs to the anthranilate phosphoribosyltransferase family. In terms of assembly, homodimer. Requires Mg(2+) as cofactor.

It catalyses the reaction N-(5-phospho-beta-D-ribosyl)anthranilate + diphosphate = 5-phospho-alpha-D-ribose 1-diphosphate + anthranilate. Its pathway is amino-acid biosynthesis; L-tryptophan biosynthesis; L-tryptophan from chorismate: step 2/5. Its function is as follows. Catalyzes the transfer of the phosphoribosyl group of 5-phosphorylribose-1-pyrophosphate (PRPP) to anthranilate to yield N-(5'-phosphoribosyl)-anthranilate (PRA). The polypeptide is Anthranilate phosphoribosyltransferase (Clostridium kluyveri (strain NBRC 12016)).